Reading from the N-terminus, the 98-residue chain is DNA-binding protein Fis (98 aa).

The segment at residues 74–93 is a DNA-binding region (H-T-H motif); it reads QTRAALMMGINRGTLRKKLK.

This sequence belongs to the transcriptional regulatory Fis family. In terms of assembly, homodimer.

Functionally, activates ribosomal RNA transcription. Plays a direct role in upstream activation of rRNA promoters. In Pectobacterium atrosepticum (strain SCRI 1043 / ATCC BAA-672) (Erwinia carotovora subsp. atroseptica), this protein is DNA-binding protein Fis.